The chain runs to 153 residues: Superoxide dismutase [Cu-Zn] (153 aa).

Cu cation-binding residues include His-45, His-47, and His-62. An intrachain disulfide couples Cys-56 to Cys-145. Positions 62, 70, 79, and 82 each coordinate Zn(2+). His-119 contacts Cu cation.

This sequence belongs to the Cu-Zn superoxide dismutase family. As to quaternary structure, homodimer. It depends on Cu cation as a cofactor. The cofactor is Zn(2+).

The protein localises to the cytoplasm. It carries out the reaction 2 superoxide + 2 H(+) = H2O2 + O2. Its function is as follows. Destroys radicals which are normally produced within the cells and which are toxic to biological systems. This Drosophila teissieri (Fruit fly) protein is Superoxide dismutase [Cu-Zn].